The primary structure comprises 169 residues: Small ribosomal subunit protein uS5 (169 aa).

The S5 DRBM domain occupies 13–76 (LVEKLVSVRR…EKARRNMKDV (64 aa)).

Belongs to the universal ribosomal protein uS5 family. In terms of assembly, part of the 30S ribosomal subunit. Contacts proteins S4 and S8.

In terms of biological role, with S4 and S12 plays an important role in translational accuracy. Located at the back of the 30S subunit body where it stabilizes the conformation of the head with respect to the body. This chain is Small ribosomal subunit protein uS5, found in Hydrogenovibrio crunogenus (strain DSM 25203 / XCL-2) (Thiomicrospira crunogena).